Reading from the N-terminus, the 83-residue chain is Colicin-E5 immunity protein (83 aa).

This protein is able to protect a cell, which harbors the plasmid ColE5 encoding colicin E5, against colicin E5. The sequence is that of Colicin-E5 immunity protein (imm) from Escherichia coli.